Consider the following 504-residue polypeptide: Histidine ammonia-lyase (504 aa).

The segment at residues 142–144 (ASG) is a cross-link (5-imidazolinone (Ala-Gly)). Serine 143 is modified (2,3-didehydroalanine (Ser)).

This sequence belongs to the PAL/histidase family. In terms of processing, contains an active site 4-methylidene-imidazol-5-one (MIO), which is formed autocatalytically by cyclization and dehydration of residues Ala-Ser-Gly.

It localises to the cytoplasm. It carries out the reaction L-histidine = trans-urocanate + NH4(+). The protein operates within amino-acid degradation; L-histidine degradation into L-glutamate; N-formimidoyl-L-glutamate from L-histidine: step 1/3. The polypeptide is Histidine ammonia-lyase (Staphylococcus aureus (strain USA300)).